The following is a 1066-amino-acid chain: Vinculin (1066 aa).

Positions 1–835 are N-terminal globular head; the sequence is MPVFHTRTIE…GAVAKVREAF (835 aa). Position 97 is a phosphoserine (S97). The tract at residues 168-208 is talin-interaction; that stretch reads MTKMAKMIDERQQELTHQEHRVMLVNSMNTVKELLPVLISA. K173 bears the N6-acetyllysine mark. Repeat copies occupy residues 259-369, 370-479, and 480-589. The segment at 259–589 is 3 X 112 AA tandem repeats; the sequence is ASKDTEAMKR…LKDLKAQMQE (331 aa). S260, S272, S275, S290, S346, and S434 each carry phosphoserine. K496 carries the N6-acetyllysine modification. A Phosphotyrosine modification is found at Y537. S574, S579, and S600 each carry phosphoserine. Phosphothreonine occurs at positions 604 and 672. S721 is subject to Phosphoserine. Positions 741-764 are interaction with ACTN4; the sequence is MANIQPQMLVAGATSIARRANRIL. S795 and S809 each carry phosphoserine. Residue Y822 is modified to Phosphotyrosine. Positions 836–878 are linker (Pro-rich); it reads QPQEPDFPPPPPDLEQLRLTDELAPPKPPLPEGEVPPPRPPPP. The segment at 857 to 887 is disordered; the sequence is ELAPPKPPLPEGEVPPPRPPPPEEKDEEFPE. Positions 860-876 are enriched in pro residues; that stretch reads PPKPPLPEGEVPPPRPP. A C-terminal tail region spans residues 879-1066; the sequence is EEKDEEFPEQ…RWVRKTPWYQ (188 aa). 2 facilitates phospholipid membrane insertion regions span residues 935 to 978 and 1052 to 1066; these read RLVR…KRIR and AGFTLRWVRKTPWYQ. Y1065 is modified (phosphotyrosine; by SRC-type Tyr-kinases).

The protein belongs to the vinculin/alpha-catenin family. Exhibits self-association properties. Part of a complex composed of THSD1, PTK2/FAK1, TLN1 and VCL. Interacts with APBB1IP, NRAP and TLN1. Interacts with SYNM. Interacts with CTNNB1 and this interaction is necessary for its localization to the cell-cell junctions and for its function in regulating cell surface expression of E-cadherin. Interacts with SORBS1. Interacts with SYNM. Interacts with CTNNA1. Binds to ACTN4; this interaction triggers conformational changes. Interacts with FLII. Phosphorylated; on serines, threonines and tyrosines. Phosphorylation on Tyr-1065 in activated platelets affects head-tail interactions and cell spreading but has no effect on actin binding nor on localization to focal adhesion plaques. Post-translationally, acetylated; mainly by myristic acid but also by a small amount of palmitic acid.

Its subcellular location is the cell membrane. The protein resides in the cell junction. It localises to the adherens junction. The protein localises to the focal adhesion. It is found in the cytoplasm. Its subcellular location is the cytoskeleton. The protein resides in the sarcolemma. It localises to the cell projection. The protein localises to the podosome. Actin filament (F-actin)-binding protein involved in cell-matrix adhesion and cell-cell adhesion. Regulates cell-surface E-cadherin expression and potentiates mechanosensing by the E-cadherin complex. May also play important roles in cell morphology and locomotion. This is Vinculin (Vcl) from Mus musculus (Mouse).